An 85-amino-acid polypeptide reads, in one-letter code: Antitoxin VapB43 (85 aa).

Residues glycine 37–arginine 60 are disordered.

Functionally, antitoxin component of a type II toxin-antitoxin (TA) system. The polypeptide is Antitoxin VapB43 (vapB43) (Mycobacterium tuberculosis (strain CDC 1551 / Oshkosh)).